The chain runs to 577 residues: Multidrug transporter TPO1_2 (577 aa).

The disordered stretch occupies residues 1–63 (MSSTSSDRPY…ALSKNSTQTS (63 aa)). N-linked (GlcNAc...) asparagine glycans are attached at residues Asn44 and Asn58. 12 consecutive transmembrane segments (helical) span residues 137-157 (VMLC…SSIF), 167-187 (IYHV…LGFA), 204-224 (GVLV…ATAK), 234-254 (FFAG…FADM), 263-283 (AICL…VIGS), 293-313 (WLEY…LFFF), 368-388 (PLLL…YLLL), 406-426 (ELPY…IWWM), 446-466 (LLPM…FCWT), 475-495 (WIVP…IFLP), 504-526 (YLLI…GAAF), and 541-561 (YAGL…LLFL).

Belongs to the major facilitator superfamily. DHA1 family. Polyamines/proton antiporter (TC 2.A.1.2.16) subfamily.

It is found in the cell membrane. Multidrug resistance transporter involved in resistance to azole antifungal drugs such as the imidazoles miconazole, ketoconazole, and tioconazole; as well as the triazoles itraconazole and fluconazole. Also plays a role in the resistance to other antifungal drug families such as the polyene amphotericin B, the pyrimide analog flucytosine, the fungicide mancozeb, and the polyamine spermine. Decreases the intracellular accumulation of clotrimazole by mediating its extrusion from cells. Plays a role in biofilm formation. This chain is Multidrug transporter TPO1_2, found in Candida glabrata (strain ATCC 2001 / BCRC 20586 / JCM 3761 / NBRC 0622 / NRRL Y-65 / CBS 138) (Yeast).